Consider the following 630-residue polypeptide: Beta-phellandrene synthase, chloroplastic (630 aa).

A chloroplast-targeting transit peptide spans 1–48 (MALVSSAPKSCLHKSLIRSTHHELKPLRRTIPTLGMCRRGKSFTPSVS). Mg(2+) contacts are provided by D381, D385, and D533. The DDXXD motif signature appears at 381 to 385 (DDIYD).

This sequence belongs to the terpene synthase family. Tpsd subfamily. Mg(2+) is required as a cofactor. The cofactor is Mn(2+). It depends on K(+) as a cofactor.

It is found in the plastid. The protein localises to the chloroplast. It carries out the reaction (2E)-geranyl diphosphate = (-)-beta-phellandrene + diphosphate. It functions in the pathway terpene metabolism; oleoresin biosynthesis. Converts geranyl diphosphate to four products with (-)-(4S)-beta-phellandrene (52%) as the major olefin, and lesser amounts of (-)-(1S,5S)-beta-pinene (34%), (-)-1S,5S-alpha-pinene (8.5%), and (-)-(4S)-limonene (6%). Involved in defensive oleoresin formation in conifers in response to insect attack or other injury. Involved in monoterpene (C10) olefins biosynthesis. The protein is Beta-phellandrene synthase, chloroplastic (ag8) of Abies grandis (Grand fir).